Reading from the N-terminus, the 49-residue chain is uncharacterized protein (49 aa).

The helical transmembrane segment at 17-39 (LLVFDTSLYIPPFMLSFIGYSLS) threads the bilayer.

It localises to the membrane. This is an uncharacterized protein from Saccharomyces cerevisiae (strain ATCC 204508 / S288c) (Baker's yeast).